A 149-amino-acid chain; its full sequence is D-aminoacyl-tRNA deacylase (149 aa).

The Gly-cisPro motif, important for rejection of L-amino acids signature appears at 137–138 (GP).

This sequence belongs to the DTD family. Homodimer.

It localises to the cytoplasm. It carries out the reaction glycyl-tRNA(Ala) + H2O = tRNA(Ala) + glycine + H(+). The catalysed reaction is a D-aminoacyl-tRNA + H2O = a tRNA + a D-alpha-amino acid + H(+). In terms of biological role, an aminoacyl-tRNA editing enzyme that deacylates mischarged D-aminoacyl-tRNAs. Also deacylates mischarged glycyl-tRNA(Ala), protecting cells against glycine mischarging by AlaRS. Acts via tRNA-based rather than protein-based catalysis; rejects L-amino acids rather than detecting D-amino acids in the active site. By recycling D-aminoacyl-tRNA to D-amino acids and free tRNA molecules, this enzyme counteracts the toxicity associated with the formation of D-aminoacyl-tRNA entities in vivo and helps enforce protein L-homochirality. This is D-aminoacyl-tRNA deacylase from Halothermothrix orenii (strain H 168 / OCM 544 / DSM 9562).